Here is a 165-residue protein sequence, read N- to C-terminus: Thiol peroxidase (165 aa).

The Thioredoxin domain maps to 18–165 (PQKGAQAPAF…PNYAAALAAL (148 aa)). The active-site Cysteine sulfenic acid (-SOH) intermediate is the C60. Residues C60 and C94 are joined by a disulfide bond.

The protein belongs to the peroxiredoxin family. Tpx subfamily. As to quaternary structure, homodimer.

It catalyses the reaction a hydroperoxide + [thioredoxin]-dithiol = an alcohol + [thioredoxin]-disulfide + H2O. Its function is as follows. Thiol-specific peroxidase that catalyzes the reduction of hydrogen peroxide and organic hydroperoxides to water and alcohols, respectively. Plays a role in cell protection against oxidative stress by detoxifying peroxides. The protein is Thiol peroxidase of Pseudomonas aeruginosa (strain ATCC 15692 / DSM 22644 / CIP 104116 / JCM 14847 / LMG 12228 / 1C / PRS 101 / PAO1).